Consider the following 353-residue polypeptide: MLRVLGIESSCDETAAAVVEGAEHGHPHGVVVRSNVVWSQLEVHALYGGVVPELASRAHIRHIQPVIEQALAEAGVRPQQLDAIAVTVAPGLVGALLVGVAAAQGLAVALDKPLVPVHHMEGHLMSPFLMAGVVPAMEFPFVALLVSGGHTLLLHARDFGDYQLLGQTRDDAVGEAFDKGARMLGLGYPGGPEVAALAQSGDRQAVAFPRVLLDRSQFDFSFSGLKTALRTHLLKFPPESGGPSLADVAASYQEAIVDTLVIKSLSACRHVGVSRLVIAGGVGANRRLREKLAKQALKQGVQLYAPPIHLCTDNGAMIASAGVCRLARGDQARGVVNAVPRLPIHELEKIYGR.

Fe cation-binding residues include His119 and His123. Substrate contacts are provided by residues 145 to 149 (LVSGG), Asp178, Gly191, and Asn285. Asp313 contributes to the Fe cation binding site.

The protein belongs to the KAE1 / TsaD family. Requires Fe(2+) as cofactor.

The protein resides in the cytoplasm. The enzyme catalyses L-threonylcarbamoyladenylate + adenosine(37) in tRNA = N(6)-L-threonylcarbamoyladenosine(37) in tRNA + AMP + H(+). Required for the formation of a threonylcarbamoyl group on adenosine at position 37 (t(6)A37) in tRNAs that read codons beginning with adenine. Is involved in the transfer of the threonylcarbamoyl moiety of threonylcarbamoyl-AMP (TC-AMP) to the N6 group of A37, together with TsaE and TsaB. TsaD likely plays a direct catalytic role in this reaction. This Magnetococcus marinus (strain ATCC BAA-1437 / JCM 17883 / MC-1) protein is tRNA N6-adenosine threonylcarbamoyltransferase.